Reading from the N-terminus, the 245-residue chain is MTSSSSFSRFDGRAQDQMRAVKITRGFTSNPAGSVLVEFGNTRVMCTASVELGVPRFKRDSGEGWLTAEYAMLPAATAERNRRESMAGKVKGRTHEISRLIGRSLRAAVDLSQLGENTIAIDCDVLQADGGTRTASITGAYVALADAIKVLQERGVVPGSPLLAPVAAVSVGLVDGNVCLDLPYEEDSRADVDLNVVMTEHGEFVEIQGTGEETTFTRAQLNDMLDHAEKGCRELVAAQKAALGI.

Residues Arg93 and 131–133 (GTR) each bind phosphate.

This sequence belongs to the RNase PH family. As to quaternary structure, homohexameric ring arranged as a trimer of dimers.

The catalysed reaction is tRNA(n+1) + phosphate = tRNA(n) + a ribonucleoside 5'-diphosphate. In terms of biological role, phosphorolytic 3'-5' exoribonuclease that plays an important role in tRNA 3'-end maturation. Removes nucleotide residues following the 3'-CCA terminus of tRNAs; can also add nucleotides to the ends of RNA molecules by using nucleoside diphosphates as substrates, but this may not be physiologically important. Probably plays a role in initiation of 16S rRNA degradation (leading to ribosome degradation) during starvation. This Corynebacterium glutamicum (strain ATCC 13032 / DSM 20300 / JCM 1318 / BCRC 11384 / CCUG 27702 / LMG 3730 / NBRC 12168 / NCIMB 10025 / NRRL B-2784 / 534) protein is Ribonuclease PH.